The following is a 428-amino-acid chain: MLDIQFIREHADVVKESQRKRGESVELVDEVLRSDEVRRSSLKEFEAARAQQKEIGKKVAAAPADEKAKLIAATKELSQKVSEYKAAADAAAEEYTTAMWKLSNIVEPEAPEGGEDDYVVVKKVGQIRDFAAEGFEPKDHLTLGRGVAGIDMERGVKVGGSRFYFLRGQVARMQIAMLTMAVDQAEEHGFTLAITPTLVRPEVMRGTGFLNSHADEIYRLREPDDQYLVGTSEVALAGMHENEILNLENGPLRYCGWSSCYRREAGAAGKDTSGIIRVHQFDKVEMFVYAKQEDSYKEHEHLLAMEQEMLGKVEVPYRIIDTAAGDLGSSAARKFDCEAWVPTQGRYRELTSTSNCTEYQARRLNIRERMEDGNTRAVSTLNGTLATTRWLVAILENHQQKDGSIEIPKAMRPYMGGKEVIEPTKWEA.

231-233 (TSE) is an L-serine binding site. ATP-binding positions include 262 to 264 (RRE) and Val278. Residue Glu285 participates in L-serine binding. 349–352 (ELTS) provides a ligand contact to ATP. L-serine is bound at residue Thr384.

The protein belongs to the class-II aminoacyl-tRNA synthetase family. Type-1 seryl-tRNA synthetase subfamily. As to quaternary structure, homodimer. The tRNA molecule binds across the dimer.

It is found in the cytoplasm. The catalysed reaction is tRNA(Ser) + L-serine + ATP = L-seryl-tRNA(Ser) + AMP + diphosphate + H(+). It carries out the reaction tRNA(Sec) + L-serine + ATP = L-seryl-tRNA(Sec) + AMP + diphosphate + H(+). Its pathway is aminoacyl-tRNA biosynthesis; selenocysteinyl-tRNA(Sec) biosynthesis; L-seryl-tRNA(Sec) from L-serine and tRNA(Sec): step 1/1. In terms of biological role, catalyzes the attachment of serine to tRNA(Ser). Is also able to aminoacylate tRNA(Sec) with serine, to form the misacylated tRNA L-seryl-tRNA(Sec), which will be further converted into selenocysteinyl-tRNA(Sec). The polypeptide is Serine--tRNA ligase (Bifidobacterium adolescentis (strain ATCC 15703 / DSM 20083 / NCTC 11814 / E194a)).